Consider the following 859-residue polypeptide: Rod cGMP-specific 3',5'-cyclic phosphodiesterase subunit alpha (859 aa).

Glycine 2 is modified (N-acetylglycine). 2 GAF domains span residues 73–222 (QAEK…NLIM) and 254–431 (DIER…GWSV). The region spanning 483 to 816 (EEEELAEILQ…KEWKALADEY (334 aa)) is the PDEase domain. Histidine 559 serves as the catalytic Proton donor. Positions 563, 599, 600, and 720 each coordinate a divalent metal cation. The disordered stretch occupies residues 823–859 (LEEEKQKQQAAKQAASGNQPGGNPLQGAPASKSCCIQ). Cysteine 856 is subject to Cysteine methyl ester. Residue cysteine 856 is the site of S-farnesyl cysteine attachment. Residues 857-859 (CIQ) constitute a propeptide, removed in mature form.

This sequence belongs to the cyclic nucleotide phosphodiesterase family. As to quaternary structure, oligomer composed of two catalytic chains (alpha and beta), an inhibitory chain (gamma) and the delta chain. A divalent metal cation serves as cofactor.

The protein resides in the cell membrane. The protein localises to the cell projection. Its subcellular location is the cilium. It localises to the photoreceptor outer segment. The catalysed reaction is 3',5'-cyclic GMP + H2O = GMP + H(+). Functionally, rod-specific cGMP phosphodiesterase that catalyzes the hydrolysis of 3',5'-cyclic GMP. This protein participates in processes of transmission and amplification of the visual signal. In Mus musculus (Mouse), this protein is Rod cGMP-specific 3',5'-cyclic phosphodiesterase subunit alpha.